We begin with the raw amino-acid sequence, 503 residues long: MEFSVKSGSPEKQRSACIVVGVFEPRRLSPIAEQLDKISDGYISALLRRGELEGKPGQTLLLHHVPNVLSERILLIGCGKERELDERQYKQVIQKTINTLNDTGSMEAVCFLTELHVKGRNNYWKVRQAVETAKETLYSFDQLKTNKSEPRRPLRKMVFNVPTRRELTSGERAILHGLAIAAAIKAAKDLGNMPPNICNAAYLASQARQLADSYSKNVITRVIGEQQMKELGMHSYLAVGQGSQNESLMSVIEYKGNASEDARPIVLVGKGLTFDSGGISIKPSEGMDEMKYDMCGAAAVYGVMRMVAELQLPINVIGVLAGCENMPGGRAYRPGDVLTTMSGQTVEVLNTDAEGRLVLCDVLTYVERFEPEAVIDVATLTGACVIALGHHITGLMANHNPLAHELIAASEQSGDRAWRLPLGDEYQEQLESNFADMANIGGRPGGAITAGCFLSRFTRKYNWAHLDIAGTAWRSGKAKGATGRPVALLAQFLLNRAGFNGEE.

K270 and D275 together coordinate Mn(2+). Residue K282 is part of the active site. Residues D293, D352, and E354 each coordinate Mn(2+). R356 is a catalytic residue.

It belongs to the peptidase M17 family. It depends on Mn(2+) as a cofactor.

It localises to the cytoplasm. It catalyses the reaction Release of an N-terminal amino acid, Xaa-|-Yaa-, in which Xaa is preferably Leu, but may be other amino acids including Pro although not Arg or Lys, and Yaa may be Pro. Amino acid amides and methyl esters are also readily hydrolyzed, but rates on arylamides are exceedingly low.. It carries out the reaction Release of an N-terminal amino acid, preferentially leucine, but not glutamic or aspartic acids.. Its function is as follows. Presumably involved in the processing and regular turnover of intracellular proteins. Catalyzes the removal of unsubstituted N-terminal amino acids from various peptides. This chain is Probable cytosol aminopeptidase, found in Shigella boydii serotype 18 (strain CDC 3083-94 / BS512).